The chain runs to 222 residues: Thymidylate kinase (222 aa).

Position 10 to 17 (10 to 17 (GLEGAGKS)) interacts with ATP.

Belongs to the thymidylate kinase family.

The enzyme catalyses dTMP + ATP = dTDP + ADP. Its function is as follows. Phosphorylation of dTMP to form dTDP in both de novo and salvage pathways of dTTP synthesis. This is Thymidylate kinase from Alteromonas mediterranea (strain DSM 17117 / CIP 110805 / LMG 28347 / Deep ecotype).